A 383-amino-acid polypeptide reads, in one-letter code: Succinyl-diaminopimelate desuccinylase (383 aa).

His-79 lines the Zn(2+) pocket. Asp-81 is a catalytic residue. Residue Asp-110 coordinates Zn(2+). The active-site Proton acceptor is the Glu-141. Residues Glu-142, Glu-170, and His-355 each contribute to the Zn(2+) site.

It belongs to the peptidase M20A family. DapE subfamily. Homodimer. Zn(2+) is required as a cofactor. Requires Co(2+) as cofactor.

It catalyses the reaction N-succinyl-(2S,6S)-2,6-diaminopimelate + H2O = (2S,6S)-2,6-diaminopimelate + succinate. It functions in the pathway amino-acid biosynthesis; L-lysine biosynthesis via DAP pathway; LL-2,6-diaminopimelate from (S)-tetrahydrodipicolinate (succinylase route): step 3/3. In terms of biological role, catalyzes the hydrolysis of N-succinyl-L,L-diaminopimelic acid (SDAP), forming succinate and LL-2,6-diaminopimelate (DAP), an intermediate involved in the bacterial biosynthesis of lysine and meso-diaminopimelic acid, an essential component of bacterial cell walls. The chain is Succinyl-diaminopimelate desuccinylase from Helicobacter pylori (strain HPAG1).